The primary structure comprises 304 residues: Acetaldehyde dehydrogenase 1 (304 aa).

11-14 provides a ligand contact to NAD(+); the sequence is SGNI. The active-site Acyl-thioester intermediate is cysteine 130. NAD(+)-binding positions include 161–169 and asparagine 272; that span reads SVGPGTRAN.

Belongs to the acetaldehyde dehydrogenase family.

The enzyme catalyses acetaldehyde + NAD(+) + CoA = acetyl-CoA + NADH + H(+). This is Acetaldehyde dehydrogenase 1 (lapF) from Azoarcus sp. (strain BH72).